Reading from the N-terminus, the 443-residue chain is Protein UIP5 (443 aa).

A signal peptide spans 1 to 27; the sequence is MSRDVRAEKLAISLLILSLFLIFQLVA. Over 28-398 the chain is Perinuclear space; sequence EIYLNNGDQY…LFKVVLTIWH (371 aa). Residues 399-420 form a helical membrane-spanning segment; sequence YSEILLLIMGIYLFSACIRVFQ. Residues 421-443 lie on the Cytoplasmic side of the membrane; that stretch reads RRFKKIRSRRKRAGSHSVGLLPM.

It is found in the nucleus membrane. This is Protein UIP5 (UIP5) from Saccharomyces cerevisiae (strain ATCC 204508 / S288c) (Baker's yeast).